The chain runs to 315 residues: Putative quercetin 2,3-dioxygenase PA1205 (315 aa).

Positions 77, 79, 121, and 123 each coordinate a divalent metal cation.

The protein belongs to the pirin family. Requires a divalent metal cation as cofactor.

The catalysed reaction is quercetin + O2 = 2-(3,4-dihydroxybenzoyloxy)-4,6-dihydroxybenzoate + CO. It functions in the pathway flavonoid metabolism; quercetin degradation. Functionally, putative quercetin 2,3-dioxygenase. The polypeptide is Putative quercetin 2,3-dioxygenase PA1205 (Pseudomonas aeruginosa (strain ATCC 15692 / DSM 22644 / CIP 104116 / JCM 14847 / LMG 12228 / 1C / PRS 101 / PAO1)).